We begin with the raw amino-acid sequence, 318 residues long: Mevalonate 3-kinase (318 aa).

Leu19 serves as a coordination point for substrate. ATP contacts are provided by residues 96 to 100 (YSSQN) and 105 to 108 (SGSS). Residues Glu140 and Arg144 each coordinate substrate. Arg185 and Ser188 together coordinate ATP.

Belongs to the GHMP kinase family. In terms of assembly, homodimer.

The enzyme catalyses (R)-mevalonate + ATP = (R)-3-phosphomevalonate + ADP + H(+). It participates in isoprenoid biosynthesis; isopentenyl diphosphate biosynthesis via mevalonate pathway. In terms of biological role, catalyzes the phosphorylation of mevalonate (MVA) to yield mevalonate-3-phosphate. Functions in an alternative mevalonate pathway, only present in extreme acidophiles of the Thermoplasmatales order, which passes through mevalonate 3-phosphate rather than mevalonate 5-phosphate. This Thermoplasma acidophilum (strain ATCC 25905 / DSM 1728 / JCM 9062 / NBRC 15155 / AMRC-C165) protein is Mevalonate 3-kinase.